The following is an 89-amino-acid chain: NADH-ubiquinone oxidoreductase chain 4L (89 aa).

Helical transmembrane passes span 1–21, 22–42, and 57–77; these read MNIT…NRKN, IILM…LILV, and IYII…LVAF.

The protein belongs to the complex I subunit 4L family.

It localises to the mitochondrion membrane. The enzyme catalyses a ubiquinone + NADH + 5 H(+)(in) = a ubiquinol + NAD(+) + 4 H(+)(out). Functionally, core subunit of the mitochondrial membrane respiratory chain NADH dehydrogenase (Complex I) that is believed to belong to the minimal assembly required for catalysis. Complex I functions in the transfer of electrons from NADH to the respiratory chain. The immediate electron acceptor for the enzyme is believed to be ubiquinone. This is NADH-ubiquinone oxidoreductase chain 4L (ndh-4L) from Neurospora crassa (strain ATCC 24698 / 74-OR23-1A / CBS 708.71 / DSM 1257 / FGSC 987).